The primary structure comprises 428 residues: Serine--tRNA ligase (428 aa).

231 to 233 is an L-serine binding site; the sequence is TAE. 262–264 contacts ATP; that stretch reads RAE. E285 lines the L-serine pocket. 349 to 352 contributes to the ATP binding site; sequence EISS. Position 385 (S385) interacts with L-serine.

It belongs to the class-II aminoacyl-tRNA synthetase family. Type-1 seryl-tRNA synthetase subfamily. As to quaternary structure, homodimer. The tRNA molecule binds across the dimer.

The protein localises to the cytoplasm. It carries out the reaction tRNA(Ser) + L-serine + ATP = L-seryl-tRNA(Ser) + AMP + diphosphate + H(+). It catalyses the reaction tRNA(Sec) + L-serine + ATP = L-seryl-tRNA(Sec) + AMP + diphosphate + H(+). Its pathway is aminoacyl-tRNA biosynthesis; selenocysteinyl-tRNA(Sec) biosynthesis; L-seryl-tRNA(Sec) from L-serine and tRNA(Sec): step 1/1. Catalyzes the attachment of serine to tRNA(Ser). Is also able to aminoacylate tRNA(Sec) with serine, to form the misacylated tRNA L-seryl-tRNA(Sec), which will be further converted into selenocysteinyl-tRNA(Sec). The chain is Serine--tRNA ligase from Methylorubrum extorquens (strain CM4 / NCIMB 13688) (Methylobacterium extorquens).